The primary structure comprises 195 residues: MKVNHAEIVISAVSKKQYPEDQLPEIALAGRSNVGKSSFINRLINRKNLARTSSKPGKTQTLNFYRINESFYFVDVPGYGYAKVSKKEREKWGRMMEEYFQTRDTLRAVVLVTDLRHDPTQDDIQMYDFIKYFDLPVIIIGTKLDKITKNKRQKHINRAKQVLEMDETDLFIPFSAEIGEGKDEAWSALSRYIKR.

The 174-residue stretch at Gln22–Arg195 folds into the EngB-type G domain. GTP-binding positions include Gly30–Ser37, Gly57–Thr61, Asp75–Gly78, Thr142–Asp145, and Phe174–Ala176. Mg(2+) contacts are provided by Ser37 and Thr59.

This sequence belongs to the TRAFAC class TrmE-Era-EngA-EngB-Septin-like GTPase superfamily. EngB GTPase family. The cofactor is Mg(2+).

Functionally, necessary for normal cell division and for the maintenance of normal septation. The sequence is that of Probable GTP-binding protein EngB from Oceanobacillus iheyensis (strain DSM 14371 / CIP 107618 / JCM 11309 / KCTC 3954 / HTE831).